The chain runs to 417 residues: Gamma-glutamyl phosphate reductase (417 aa).

Belongs to the gamma-glutamyl phosphate reductase family.

The protein localises to the cytoplasm. The catalysed reaction is L-glutamate 5-semialdehyde + phosphate + NADP(+) = L-glutamyl 5-phosphate + NADPH + H(+). It functions in the pathway amino-acid biosynthesis; L-proline biosynthesis; L-glutamate 5-semialdehyde from L-glutamate: step 2/2. Catalyzes the NADPH-dependent reduction of L-glutamate 5-phosphate into L-glutamate 5-semialdehyde and phosphate. The product spontaneously undergoes cyclization to form 1-pyrroline-5-carboxylate. This chain is Gamma-glutamyl phosphate reductase, found in Serratia marcescens.